A 262-amino-acid chain; its full sequence is Late embryogenesis abundant protein 31 (262 aa).

The short motif at 6 to 10 is the Nuclear localization signal (NLS) element; the sequence is QPKRP. SMP domains follow at residues 14–68, 136–192, and 201–260; these read VTYG…ANKR, ITIG…NHNA, and IKLI…NERA.

It belongs to the LEA type SMP family. Embryo specific, only in dry mature seeds.

The protein localises to the nucleus. It is found in the nucleolus. It localises to the cytoplasm. LEA proteins are late embryonic proteins abundant in higher plant seed embryos. The function of those proteins is not known. Promotes germination rate. Enhances cation toxicity (e.g. lithium ion) and osmotic stress (e.g. NaCl and sorbitol) tolerance during germination and in seedlings. This chain is Late embryogenesis abundant protein 31, found in Arabidopsis thaliana (Mouse-ear cress).